Here is a 173-residue protein sequence, read N- to C-terminus: Cell division protein SepF (173 aa).

Residues 31 to 82 (FEDFDEPLDERPSRNRSPRDDSRNNAVTDSSDHSPSRNERRSPAPAPATADL) form a disordered region. Composition is skewed to basic and acidic residues over residues 39 to 53 (DERPSRNRSPRDDSR) and 60 to 72 (SSDHSPSRNERRS).

Belongs to the SepF family. In terms of assembly, homodimer. Interacts with FtsZ.

Its subcellular location is the cytoplasm. Its function is as follows. Cell division protein that is part of the divisome complex and is recruited early to the Z-ring. Probably stimulates Z-ring formation, perhaps through the cross-linking of FtsZ protofilaments. Its function overlaps with FtsA. The protein is Cell division protein SepF of Thermobifida fusca (strain YX).